A 307-amino-acid chain; its full sequence is NAD kinase 1 (307 aa).

Aspartate 67 (proton acceptor) is an active-site residue. NAD(+) contacts are provided by residues 67–68 (DG), 149–150 (ND), arginine 179, and aspartate 181.

The protein belongs to the NAD kinase family. Requires a divalent metal cation as cofactor.

The protein localises to the cytoplasm. It carries out the reaction NAD(+) + ATP = ADP + NADP(+) + H(+). In terms of biological role, involved in the regulation of the intracellular balance of NAD and NADP, and is a key enzyme in the biosynthesis of NADP. Catalyzes specifically the phosphorylation on 2'-hydroxyl of the adenosine moiety of NAD to yield NADP. The chain is NAD kinase 1 from Prochlorococcus marinus (strain SARG / CCMP1375 / SS120).